Consider the following 178-residue polypeptide: ATP-dependent protease subunit HslV (178 aa).

The active site involves Thr7. 3 residues coordinate Na(+): Gly162, Cys165, and Thr168.

Belongs to the peptidase T1B family. HslV subfamily. As to quaternary structure, a double ring-shaped homohexamer of HslV is capped on each side by a ring-shaped HslU homohexamer. The assembly of the HslU/HslV complex is dependent on binding of ATP.

The protein resides in the cytoplasm. It carries out the reaction ATP-dependent cleavage of peptide bonds with broad specificity.. Its activity is regulated as follows. Allosterically activated by HslU binding. Its function is as follows. Protease subunit of a proteasome-like degradation complex believed to be a general protein degrading machinery. This Dechloromonas aromatica (strain RCB) protein is ATP-dependent protease subunit HslV.